The chain runs to 212 residues: Uracil phosphoribosyltransferase (212 aa).

5-phospho-alpha-D-ribose 1-diphosphate contacts are provided by residues arginine 78, arginine 103, and 130-138 (DPMLATGGS). Uracil-binding positions include isoleucine 193 and 198–200 (GDA). Aspartate 199 contacts 5-phospho-alpha-D-ribose 1-diphosphate.

This sequence belongs to the UPRTase family. The cofactor is Mg(2+).

It carries out the reaction UMP + diphosphate = 5-phospho-alpha-D-ribose 1-diphosphate + uracil. It functions in the pathway pyrimidine metabolism; UMP biosynthesis via salvage pathway; UMP from uracil: step 1/1. Its activity is regulated as follows. Allosterically activated by GTP. Its function is as follows. Catalyzes the conversion of uracil and 5-phospho-alpha-D-ribose 1-diphosphate (PRPP) to UMP and diphosphate. This is Uracil phosphoribosyltransferase from Pseudomonas paraeruginosa (strain DSM 24068 / PA7) (Pseudomonas aeruginosa (strain PA7)).